A 246-amino-acid polypeptide reads, in one-letter code: Acetoacetate decarboxylase (246 aa).

K116 acts as the Schiff-base intermediate with acetoacetate in catalysis.

It belongs to the ADC family.

The enzyme catalyses acetoacetate + H(+) = acetone + CO2. Functionally, catalyzes the conversion of acetoacetate to acetone and carbon dioxide. This Burkholderia vietnamiensis (strain G4 / LMG 22486) (Burkholderia cepacia (strain R1808)) protein is Acetoacetate decarboxylase.